We begin with the raw amino-acid sequence, 186 residues long: Tumor necrosis factor alpha-induced protein 8-like protein 1 (186 aa).

Positions 37-70 (EVLDELYRVTKEYTRNRKEAQKIIKNLIKMVVKL) form a coiled coil.

Belongs to the TNFAIP8 family.

Its subcellular location is the cytoplasm. This Danio rerio (Zebrafish) protein is Tumor necrosis factor alpha-induced protein 8-like protein 1 (tnfaip8l1).